An 80-amino-acid polypeptide reads, in one-letter code: Exodeoxyribonuclease 7 small subunit (80 aa).

This sequence belongs to the XseB family. As to quaternary structure, heterooligomer composed of large and small subunits.

The protein resides in the cytoplasm. The catalysed reaction is Exonucleolytic cleavage in either 5'- to 3'- or 3'- to 5'-direction to yield nucleoside 5'-phosphates.. In terms of biological role, bidirectionally degrades single-stranded DNA into large acid-insoluble oligonucleotides, which are then degraded further into small acid-soluble oligonucleotides. In Salmonella paratyphi B (strain ATCC BAA-1250 / SPB7), this protein is Exodeoxyribonuclease 7 small subunit.